The primary structure comprises 173 residues: dCTP deaminase, dUMP-forming (173 aa).

DCTP contacts are provided by residues 93 to 98 (RSSTGR), aspartate 111, 119 to 121 (TLE), glutamine 138, and tyrosine 151. The active-site Proton donor/acceptor is glutamate 121.

The protein belongs to the dCTP deaminase family. In terms of assembly, homotrimer.

The enzyme catalyses dCTP + 2 H2O = dUMP + NH4(+) + diphosphate. Its pathway is pyrimidine metabolism; dUMP biosynthesis; dUMP from dCTP: step 1/1. Functionally, bifunctional enzyme that catalyzes both the deamination of dCTP to dUTP and the hydrolysis of dUTP to dUMP without releasing the toxic dUTP intermediate. The chain is dCTP deaminase, dUMP-forming from Clostridium botulinum (strain Eklund 17B / Type B).